A 180-amino-acid chain; its full sequence is Inosine/xanthosine triphosphatase (180 aa).

8-13 contributes to the substrate binding site; sequence TTNPAK. Residue D38 participates in Mg(2+) binding.

Belongs to the YjjX NTPase family. In terms of assembly, homodimer. It depends on Mg(2+) as a cofactor. Mn(2+) is required as a cofactor.

The catalysed reaction is XTP + H2O = XDP + phosphate + H(+). It catalyses the reaction ITP + H2O = IDP + phosphate + H(+). In terms of biological role, phosphatase that hydrolyzes non-canonical purine nucleotides such as XTP and ITP to their respective diphosphate derivatives. Probably excludes non-canonical purines from DNA/RNA precursor pool, thus preventing their incorporation into DNA/RNA and avoiding chromosomal lesions. This Yersinia pseudotuberculosis serotype O:1b (strain IP 31758) protein is Inosine/xanthosine triphosphatase.